Here is a 180-residue protein sequence, read N- to C-terminus: dCTP deaminase, dUMP-forming (180 aa).

Residues 100-105 (RSSLGR), aspartate 117, 125-127 (TLE), glutamine 146, tyrosine 160, and glutamine 167 each bind dCTP. Catalysis depends on glutamate 127, which acts as the Proton donor/acceptor.

Belongs to the dCTP deaminase family. Homotrimer.

The catalysed reaction is dCTP + 2 H2O = dUMP + NH4(+) + diphosphate. Its pathway is pyrimidine metabolism; dUMP biosynthesis; dUMP from dCTP: step 1/1. In terms of biological role, bifunctional enzyme that catalyzes both the deamination of dCTP to dUTP and the hydrolysis of dUTP to dUMP without releasing the toxic dUTP intermediate. The sequence is that of dCTP deaminase, dUMP-forming from Persephonella marina (strain DSM 14350 / EX-H1).